A 119-amino-acid polypeptide reads, in one-letter code: Large ribosomal subunit protein uL18 (119 aa).

Belongs to the universal ribosomal protein uL18 family. As to quaternary structure, part of the 50S ribosomal subunit; part of the 5S rRNA/L5/L18/L25 subcomplex. Contacts the 5S and 23S rRNAs.

In terms of biological role, this is one of the proteins that bind and probably mediate the attachment of the 5S RNA into the large ribosomal subunit, where it forms part of the central protuberance. This is Large ribosomal subunit protein uL18 from Anaeromyxobacter dehalogenans (strain 2CP-1 / ATCC BAA-258).